A 330-amino-acid polypeptide reads, in one-letter code: Replication factor C small subunit (330 aa).

48–55 (GPPGTGKT) serves as a coordination point for ATP.

It belongs to the activator 1 small subunits family. RfcS subfamily. As to quaternary structure, heteropentamer composed of four small subunits (RfcS) and one large subunit (RfcL). A homotetramer of this subunit interacts with PCNA heterodimer PCNA1-PCNA2.

Its function is as follows. Part of the RFC clamp loader complex which loads the PCNA sliding clamp onto DNA. The complex possesses DNA-dependent ATPase activity. In Saccharolobus solfataricus (strain ATCC 35092 / DSM 1617 / JCM 11322 / P2) (Sulfolobus solfataricus), this protein is Replication factor C small subunit (rfcS).